A 173-amino-acid chain; its full sequence is Photosystem I assembly protein Ycf3 (173 aa).

TPR repeat units follow at residues 35 to 68 (AYLY…EDNQ), 72 to 105 (GETL…NPKQ), and 120 to 153 (GRMA…YPGG).

This sequence belongs to the Ycf3 family.

It localises to the cellular thylakoid membrane. In terms of biological role, essential for the assembly of the photosystem I (PSI) complex. May act as a chaperone-like factor to guide the assembly of the PSI subunits. The protein is Photosystem I assembly protein Ycf3 of Prochlorococcus marinus (strain NATL1A).